The sequence spans 284 residues: D-tagatose-1,6-bisphosphate aldolase subunit GatY (284 aa).

Asp-82 (proton donor) is an active-site residue. Zn(2+)-binding residues include His-83 and His-180. Gly-181 serves as a coordination point for dihydroxyacetone phosphate. His-208 serves as a coordination point for Zn(2+). Dihydroxyacetone phosphate-binding positions include 209–211 (GAS) and 230–233 (NVAT).

This sequence belongs to the class II fructose-bisphosphate aldolase family. TagBP aldolase GatY subfamily. Forms a complex with GatZ. The cofactor is Zn(2+).

The catalysed reaction is D-tagatofuranose 1,6-bisphosphate = D-glyceraldehyde 3-phosphate + dihydroxyacetone phosphate. It participates in carbohydrate metabolism; D-tagatose 6-phosphate degradation; D-glyceraldehyde 3-phosphate and glycerone phosphate from D-tagatose 6-phosphate: step 2/2. In terms of biological role, catalytic subunit of the tagatose-1,6-bisphosphate aldolase GatYZ, which catalyzes the reversible aldol condensation of dihydroxyacetone phosphate (DHAP or glycerone-phosphate) with glyceraldehyde 3-phosphate (G3P) to produce tagatose 1,6-bisphosphate (TBP). Requires GatZ subunit for full activity and stability. Is involved in the catabolism of galactitol. In Shigella boydii serotype 4 (strain Sb227), this protein is D-tagatose-1,6-bisphosphate aldolase subunit GatY.